Here is a 545-residue protein sequence, read N- to C-terminus: T-complex protein 1 subunit gamma (545 aa).

Methionine 1 is subject to N-acetylmethionine. The disordered stretch occupies residues 1–24 (MMGHRPVLVLSQNTKRESGRKVQS). Serine 11 bears the Phosphoserine mark. A Glycyl lysine isopeptide (Lys-Gly) (interchain with G-Cter in SUMO2) cross-link involves residue lysine 15. Residue glycine 42 coordinates ADP. ATP is bound at residue glycine 42. Residue aspartate 93 coordinates Mg(2+). Residues glycine 94, threonine 95, threonine 96, serine 97, threonine 162, and lysine 163 each contribute to the ADP site. ATP contacts are provided by glycine 94, threonine 95, and threonine 96. Residue serine 170 is modified to Phosphoserine. Lysine 222 is subject to N6-acetyllysine. Phosphoserine occurs at positions 243 and 244. Position 247 is a phosphotyrosine (tyrosine 247). Residues lysine 248 and lysine 249 each participate in a glycyl lysine isopeptide (Lys-Gly) (interchain with G-Cter in SUMO2) cross-link. At serine 252 the chain carries Phosphoserine. An intrachain disulfide couples cysteine 366 to cysteine 372. Lysine 381 is covalently cross-linked (Glycyl lysine isopeptide (Lys-Gly) (interchain with G-Cter in SUMO2)). Glycine 411 serves as a coordination point for ADP. Residue glycine 411 participates in ATP binding. 2 positions are modified to phosphothreonine: threonine 430 and threonine 459. 4 residues coordinate ADP: glycine 482, glutamate 483, glutamate 497, and lysine 502. Glycine 482 lines the ATP pocket. Glutamate 497 provides a ligand contact to ATP. The tract at residues 526-545 (HKKKGDDQNRQTGAPDAGQE) is disordered.

The protein belongs to the TCP-1 chaperonin family. In terms of assembly, component of the chaperonin-containing T-complex (TRiC), a hexadecamer composed of two identical back-to-back stacked rings enclosing a protein folding chamber. Each ring is made up of eight different subunits: TCP1/CCT1, CCT2, CCT3, CCT4, CCT5, CCT6A/CCT6, CCT7, CCT8. Interacts with PACRG. Interacts with DNAAF4. Interacts with DLEC1.

Its subcellular location is the cytoplasm. It carries out the reaction ATP + H2O = ADP + phosphate + H(+). Functionally, component of the chaperonin-containing T-complex (TRiC), a molecular chaperone complex that assists the folding of actin, tubulin and other proteins upon ATP hydrolysis. The TRiC complex mediates the folding of WRAP53/TCAB1, thereby regulating telomere maintenance. As part of the TRiC complex may play a role in the assembly of BBSome, a complex involved in ciliogenesis regulating transports vesicles to the cilia. This chain is T-complex protein 1 subunit gamma (Cct3), found in Rattus norvegicus (Rat).